Consider the following 439-residue polypeptide: Acyl transferase 4 (439 aa).

Residues H166 and D382 each act as proton acceptor in the active site.

This sequence belongs to the plant acyltransferase family.

Grass-specific monolignol p-coumaroyl transferase involved in the biosynthesis of acylated monolignols or monolignol conjugates that serve as monomer precursors of lignin. Can synthesize sinapyl p-coumarate, p-coumaryl p-coumarate, sinapyl caffeate and p-coumaryl caffeate in vitro. The chain is Acyl transferase 4 from Oryza sativa subsp. japonica (Rice).